We begin with the raw amino-acid sequence, 319 residues long: Ribosomal protein uL3 glutamine methyltransferase (319 aa).

It belongs to the protein N5-glutamine methyltransferase family. PrmB subfamily.

The catalysed reaction is L-glutaminyl-[ribosomal protein uL3] + S-adenosyl-L-methionine = N(5)-methyl-L-glutaminyl-[ribosomal protein uL3] + S-adenosyl-L-homocysteine + H(+). Its function is as follows. Methylates large ribosomal subunit protein uL3 on a specific glutamine residue. The sequence is that of Ribosomal protein uL3 glutamine methyltransferase from Bradyrhizobium diazoefficiens (strain JCM 10833 / BCRC 13528 / IAM 13628 / NBRC 14792 / USDA 110).